A 364-amino-acid chain; its full sequence is Dual-specificity RNA methyltransferase RlmN (364 aa).

The Proton acceptor role is filled by E91. Positions 102-337 (GTLRITQCLS…AIIRKSKGQD (236 aa)) constitute a Radical SAM core domain. C109 and C342 are oxidised to a cystine. Positions 116, 120, and 123 each coordinate [4Fe-4S] cluster. Residues 169 to 170 (GE), S201, 223 to 225 (SLH), and N299 each bind S-adenosyl-L-methionine. C342 acts as the S-methylcysteine intermediate in catalysis.

Belongs to the radical SAM superfamily. RlmN family. Requires [4Fe-4S] cluster as cofactor.

Its subcellular location is the cytoplasm. The catalysed reaction is adenosine(2503) in 23S rRNA + 2 reduced [2Fe-2S]-[ferredoxin] + 2 S-adenosyl-L-methionine = 2-methyladenosine(2503) in 23S rRNA + 5'-deoxyadenosine + L-methionine + 2 oxidized [2Fe-2S]-[ferredoxin] + S-adenosyl-L-homocysteine. It carries out the reaction adenosine(37) in tRNA + 2 reduced [2Fe-2S]-[ferredoxin] + 2 S-adenosyl-L-methionine = 2-methyladenosine(37) in tRNA + 5'-deoxyadenosine + L-methionine + 2 oxidized [2Fe-2S]-[ferredoxin] + S-adenosyl-L-homocysteine. Functionally, specifically methylates position 2 of adenine 2503 in 23S rRNA and position 2 of adenine 37 in tRNAs. m2A2503 modification seems to play a crucial role in the proofreading step occurring at the peptidyl transferase center and thus would serve to optimize ribosomal fidelity. This chain is Dual-specificity RNA methyltransferase RlmN, found in Nitratidesulfovibrio vulgaris (strain ATCC 29579 / DSM 644 / CCUG 34227 / NCIMB 8303 / VKM B-1760 / Hildenborough) (Desulfovibrio vulgaris).